A 493-amino-acid polypeptide reads, in one-letter code: Xaa-Pro dipeptidase (493 aa).

Ala2 is subject to N-acetylalanine. Ser167 is modified (phosphoserine). Residue His255 participates in a dipeptide binding. The Mn(2+) site is built by Asp276, Asp287, and His370. Asp287 serves as a coordination point for a dipeptide. A dipeptide-binding residues include His377 and Arg398. Glu412 and Glu452 together coordinate Mn(2+).

This sequence belongs to the peptidase M24B family. Eukaryotic-type prolidase subfamily. Homodimer. It depends on Mn(2+) as a cofactor.

The catalysed reaction is Xaa-L-Pro dipeptide + H2O = an L-alpha-amino acid + L-proline. Dipeptidase that catalyzes the hydrolysis of dipeptides with a prolyl (Xaa-Pro) or hydroxyprolyl residue in the C-terminal position. The preferred dipeptide substrate is Gly-Pro, but other Xaa-Pro dipeptides, such as Ala-Pro, Met-Pro, Phe-Pro, Val-Pro and Leu-Pro, can be cleaved. Plays an important role in collagen metabolism because the high level of iminoacids in collagen. In Mus musculus (Mouse), this protein is Xaa-Pro dipeptidase (Pepd).